Here is a 154-residue protein sequence, read N- to C-terminus: Probable ubiquitin-conjugating enzyme E2 31 (154 aa).

Residues 8–153 (KAAQRIAMEY…AREFTARHAN (146 aa)) enclose the UBC core domain. The active-site Glycyl thioester intermediate is the Cys-91.

It belongs to the ubiquitin-conjugating enzyme family.

The enzyme catalyses S-ubiquitinyl-[E1 ubiquitin-activating enzyme]-L-cysteine + [E2 ubiquitin-conjugating enzyme]-L-cysteine = [E1 ubiquitin-activating enzyme]-L-cysteine + S-ubiquitinyl-[E2 ubiquitin-conjugating enzyme]-L-cysteine.. Its pathway is protein modification; protein ubiquitination. Accepts the ubiquitin from the E1 complex and catalyzes its covalent attachment to other proteins. This chain is Probable ubiquitin-conjugating enzyme E2 31 (UBC31), found in Arabidopsis thaliana (Mouse-ear cress).